A 74-amino-acid polypeptide reads, in one-letter code: Omega-filistatoxin-Kh1a (74 aa).

Contains 6 disulfide bonds. As to expression, expressed by the venom gland.

It is found in the secreted. Its function is as follows. Potently blocks vertebrate calcium channels Cav1 and Cav2. Is the most active on Cav2.2/CACNA1B (from HEK) (IC(50)=2.3 nM), followed by Cav2.1/CACNA1A (IC(50)=4.3 nM), Cav2.2/CACNA1B (from oocyte) (IC(50)=14.4 nM), Cav1.2/CACNA1C (IC(50)=26.8 nM), and Cav2.3/CACNA1E (IC(50)=96.4 nM). This Kukulcania hibernalis (Southern house spider) protein is Omega-filistatoxin-Kh1a.